The chain runs to 82 residues: Putative membrane protein insertion efficiency factor (82 aa).

The protein belongs to the UPF0161 family.

It is found in the cell inner membrane. In terms of biological role, could be involved in insertion of integral membrane proteins into the membrane. This is Putative membrane protein insertion efficiency factor from Synechococcus elongatus (strain ATCC 33912 / PCC 7942 / FACHB-805) (Anacystis nidulans R2).